The following is a 205-amino-acid chain: High frequency lysogenization protein HflD homolog (205 aa).

Belongs to the HflD family.

It localises to the cytoplasm. It is found in the cell inner membrane. The chain is High frequency lysogenization protein HflD homolog from Shewanella baltica (strain OS155 / ATCC BAA-1091).